The sequence spans 421 residues: D-amino acid dehydrogenase (421 aa).

Residue 3–17 participates in FAD binding; that stretch reads ILILGSGVVGTASAY.

The protein belongs to the DadA oxidoreductase family. The cofactor is FAD.

The enzyme catalyses a D-alpha-amino acid + A + H2O = a 2-oxocarboxylate + AH2 + NH4(+). It functions in the pathway amino-acid degradation; D-alanine degradation; NH(3) and pyruvate from D-alanine: step 1/1. Oxidative deamination of D-amino acids. The protein is D-amino acid dehydrogenase of Xanthobacter autotrophicus (strain ATCC BAA-1158 / Py2).